The primary structure comprises 425 residues: Homogentisate 1,2-dioxygenase (425 aa).

Catalysis depends on His283, which acts as the Proton acceptor. The Fe cation site is built by His326 and Glu332. Residues Tyr341 and His362 each coordinate homogentisate. Residue His362 coordinates Fe cation.

This sequence belongs to the homogentisate dioxygenase family. In terms of assembly, hexamer; dimer of trimers. Fe cation is required as a cofactor.

The enzyme catalyses homogentisate + O2 = 4-maleylacetoacetate + H(+). It participates in amino-acid degradation; L-phenylalanine degradation; acetoacetate and fumarate from L-phenylalanine: step 4/6. Functionally, involved in the catabolism of homogentisate (2,5-dihydroxyphenylacetate or 2,5-OH-PhAc), a central intermediate in the degradation of phenylalanine and tyrosine. Catalyzes the oxidative ring cleavage of the aromatic ring of homogentisate to yield maleylacetoacetate. The chain is Homogentisate 1,2-dioxygenase from Caulobacter vibrioides (strain ATCC 19089 / CIP 103742 / CB 15) (Caulobacter crescentus).